Consider the following 367-residue polypeptide: Protein trichome birefringence-like 39 (367 aa).

The helical; Signal-anchor for type II membrane protein transmembrane segment at 7–29 threads the bilayer; it reads GNPSFLFFFFFFLCLSTVSAYIN. The GDS motif motif lies at 120 to 122; sequence GDS. The short motif at 343-357 is the DCXHWCLPGXXDXWN motif element; the sequence is DCSHWCLPGLPDTWN.

It belongs to the PC-esterase family. TBL subfamily.

It is found in the membrane. In terms of biological role, may act as a bridging protein that binds pectin and other cell wall polysaccharides. Probably involved in maintaining esterification of pectins. May be involved in the specific O-acetylation of cell wall polymers. The polypeptide is Protein trichome birefringence-like 39 (TBL39) (Arabidopsis thaliana (Mouse-ear cress)).